Here is a 310-residue protein sequence, read N- to C-terminus: Methionyl-tRNA formyltransferase (310 aa).

109-112 (SLLP) is a (6S)-5,6,7,8-tetrahydrofolate binding site.

Belongs to the Fmt family.

The catalysed reaction is L-methionyl-tRNA(fMet) + (6R)-10-formyltetrahydrofolate = N-formyl-L-methionyl-tRNA(fMet) + (6S)-5,6,7,8-tetrahydrofolate + H(+). Functionally, attaches a formyl group to the free amino group of methionyl-tRNA(fMet). The formyl group appears to play a dual role in the initiator identity of N-formylmethionyl-tRNA by promoting its recognition by IF2 and preventing the misappropriation of this tRNA by the elongation apparatus. This chain is Methionyl-tRNA formyltransferase, found in Staphylococcus epidermidis (strain ATCC 35984 / DSM 28319 / BCRC 17069 / CCUG 31568 / BM 3577 / RP62A).